Reading from the N-terminus, the 392-residue chain is NDP-glycosyltransferase YjiC (392 aa).

UDP is bound by residues Asn18, Thr229, Ser255, Val278, His293, and Asn297–Glu301.

It belongs to the UDP-glycosyltransferase family. In terms of assembly, monomer.

It carries out the reaction an NDP-glycose + an acceptor = a glycosylated acceptor + NDP.. Its activity is regulated as follows. Activity is improved in the presence of Mn(2+), Mg(2+) and Ca(2+), and inhibited by Ni(2+), Zn(2+) and Cu(2+). Its function is as follows. Glycosyltransferase that can glycosylate a wide range of substrates, including various flavonoids, phenyl ketones, curcuminoid, lignins, zingerone, triterpenes, stilbene and anthraquinone, using UDP-glucose or ADP-glucose as sugar donor. It also exhibits O-, N- and S-glycosylation activities towards simple aromatics. In vivo, the broad acceptor tolerance of YjiC might function as a detoxification agent against exogenous xenobiotics to make the strain adaptable to the changeable environment. This is NDP-glycosyltransferase YjiC (yjiC) from Bacillus subtilis (strain 168).